An 890-amino-acid chain; its full sequence is Chloroquine resistance transporter (890 aa).

Disordered regions lie at residues 1-163 (MPPA…EAPL) and 280-300 (GMQR…AAEG). Residues 1-349 (MPPAHHGSGG…RATRWIDRNA (349 aa)) lie on the Cytoplasmic side of the membrane. Residues 8 to 19 (SGGRRRPGRGNK) are compositionally biased toward basic residues. Composition is skewed to low complexity over residues 102-126 (APSQ…SSRS) and 134-156 (SPVA…TSAS). A helical membrane pass occupies residues 350 to 372 (ATVRVACYTFLLLVTSTGNTICF). The Vacuolar segment spans residues 373–391 (KKMIDKMPNYSPCLTQVTT). A helical membrane pass occupies residues 392–412 (VVFVPVFFALSLYTDYAGGLP). Residues 413–422 (QEMADFPKRN) are Cytoplasmic-facing. The chain crosses the membrane as a helical span at residues 423–443 (FAVMGFLDSFSGVMAIIGAVH). Residues 444–447 (TTGT) are Vacuolar-facing. A helical membrane pass occupies residues 448–468 (TQVVLQQSCIVFSLLASIVML). At 469-471 (RKR) the chain is on the cytoplasmic side. Residues 472 to 492 (FHAAHYLGALVIILGVLVVKL) form a helical membrane-spanning segment. Residues 493-505 (PDLLHPSSDGGGD) lie on the Vacuolar side of the membrane. A helical transmembrane segment spans residues 506–526 (VFVFNLLYLLSNLPTAVSCVY). The Cytoplasmic portion of the chain corresponds to 527–544 (KEVAFRGVEMGTNYLQAW). A helical transmembrane segment spans residues 545 to 565 (VALFQFLIGFLVLPLNALPVL). Over 566–614 (GPQRVPLAELPASLWNGTRCLFGFNTIVTNCGGAGNMESPCDNCEGAWK) the chain is Vacuolar. An N-linked (GlcNAc...) asparagine glycan is attached at asparagine 581. Intrachain disulfides connect cysteine 585-cysteine 609 and cysteine 596-cysteine 606. Residues 615 to 634 (YVGMYLSFNLLYNMFIIFVV) traverse the membrane as a helical segment. The Cytoplasmic portion of the chain corresponds to 635–640 (KSGGAA). Residues 641-663 (LTFLVSTLRLPVTALAFCSRAIM) traverse the membrane as a helical segment. At 664 to 673 (GDRAVPPKAT) the chain is on the vacuolar side. A helical transmembrane segment spans residues 674 to 694 (DFYGLLVLILGLVIYRAGGIM). Residues 695–890 (KRRAQRRAVA…GKSRANNGCI (196 aa)) lie on the Cytoplasmic side of the membrane. Residues 798-871 (AAFTPFTQRM…NRVGGYEPPS (74 aa)) are disordered.

It belongs to the CRT-like transporter family.

The protein resides in the vacuole membrane. Functionally, nutrient transporter. Involved in maintaining the osmotic homeostasis of the digestive vacuole. Required for the proper organization of the endolysosomal system and, in turn, indirectly for microneme secretion and parasite invasion. Required for bradyzoite viability and cyst development. The sequence is that of Chloroquine resistance transporter from Toxoplasma gondii.